We begin with the raw amino-acid sequence, 529 residues long: UPF0159 protein TC_0921 (529 aa).

ThyX domains follow at residues 38 to 274 (KGAL…AEPH) and 309 to 511 (KGVK…LKFV).

It belongs to the UPF0159 family.

The sequence is that of UPF0159 protein TC_0921 from Chlamydia muridarum (strain MoPn / Nigg).